We begin with the raw amino-acid sequence, 749 residues long: 1,4-alpha-glucan branching enzyme GlgB (749 aa).

The Nucleophile role is filled by D415. E468 acts as the Proton donor in catalysis.

This sequence belongs to the glycosyl hydrolase 13 family. GlgB subfamily. In terms of assembly, monomer.

It catalyses the reaction Transfers a segment of a (1-&gt;4)-alpha-D-glucan chain to a primary hydroxy group in a similar glucan chain.. It participates in glycan biosynthesis; glycogen biosynthesis. Catalyzes the formation of the alpha-1,6-glucosidic linkages in glycogen by scission of a 1,4-alpha-linked oligosaccharide from growing alpha-1,4-glucan chains and the subsequent attachment of the oligosaccharide to the alpha-1,6 position. In Nitrosococcus oceani (strain ATCC 19707 / BCRC 17464 / JCM 30415 / NCIMB 11848 / C-107), this protein is 1,4-alpha-glucan branching enzyme GlgB.